The sequence spans 271 residues: MDFFNKFSQGLAESSTPKSSIYYSEEKDLDIKKDEAIEIGLKSQESYYQRQLREQLARDNMMAASRQPIQPLQPTIHITPLQVPTPAPTPKPRQQQTNTSSDMSNLFDWLSADDNTQPSSLLPALTPINAVQDIISKFNKDQKTTTTPSTQPSQTLPTTTCTQQSDGSISCTTPTVTPPQPPIVATVCTPTPTGGTVCTTAQQNPNPGATSQQNLDNMALKDLMSSVEKDMRQLQAETNDLVTNVYDAREYTRRAIDQILQLVKGFERFQK.

Disordered stretches follow at residues 80–101 (PLQVPTPAPTPKPRQQQTNTSS) and 140–180 (KDQK…TPPQ). A compositionally biased stretch (polar residues) spans 92 to 101 (PRQQQTNTSS). A compositionally biased stretch (low complexity) spans 144–165 (TTTTPSTQPSQTLPTTTCTQQS).

This sequence belongs to the orthopoxvirus OPG130 family. As to quaternary structure, interacts with OPG136 and its cleaved form. In terms of processing, its phosphorylation state is regulated by the OPG054 kinase and the OPG106 phosphatase.

The protein resides in the virion. Its subcellular location is the host endoplasmic reticulum-Golgi intermediate compartment membrane. Functionally, component of the virion core. Participates in virion assembly. The protein is 39kDa core protein OPG130 (OPG130) of Homo sapiens (Human).